The following is a 56-amino-acid chain: uncharacterized protein (56 aa).

Residues 6-26 (MLLIMLYMVLVVNDLILYNIL) traverse the membrane as a helical segment.

It is found in the membrane. This is an uncharacterized protein from Dictyostelium discoideum (Social amoeba).